The following is a 273-amino-acid chain: 2-dehydro-3-deoxyphosphooctonate aldolase (273 aa).

The protein belongs to the KdsA family.

It is found in the cytoplasm. The enzyme catalyses D-arabinose 5-phosphate + phosphoenolpyruvate + H2O = 3-deoxy-alpha-D-manno-2-octulosonate-8-phosphate + phosphate. It participates in carbohydrate biosynthesis; 3-deoxy-D-manno-octulosonate biosynthesis; 3-deoxy-D-manno-octulosonate from D-ribulose 5-phosphate: step 2/3. It functions in the pathway bacterial outer membrane biogenesis; lipopolysaccharide biosynthesis. The chain is 2-dehydro-3-deoxyphosphooctonate aldolase from Desulfatibacillum aliphaticivorans.